The chain runs to 107 residues: Small ribosomal subunit protein bS6 (107 aa).

This sequence belongs to the bacterial ribosomal protein bS6 family.

In terms of biological role, binds together with bS18 to 16S ribosomal RNA. The chain is Small ribosomal subunit protein bS6 from Synechococcus elongatus (strain ATCC 33912 / PCC 7942 / FACHB-805) (Anacystis nidulans R2).